Here is a 307-residue protein sequence, read N- to C-terminus: Geranylgeranyl diphosphate synthase (307 aa).

Isopentenyl diphosphate is bound by residues lysine 52, arginine 55, and histidine 86. Residues aspartate 93 and aspartate 99 each coordinate Mg(2+). (2E,6E)-farnesyl diphosphate is bound at residue arginine 104. Residue arginine 105 coordinates isopentenyl diphosphate. Residues lysine 188, threonine 189, and glutamine 226 each coordinate (2E,6E)-farnesyl diphosphate.

The protein belongs to the FPP/GGPP synthase family. It depends on Mg(2+) as a cofactor.

The enzyme catalyses isopentenyl diphosphate + (2E,6E)-farnesyl diphosphate = (2E,6E,10E)-geranylgeranyl diphosphate + diphosphate. It participates in isoprenoid biosynthesis; geranylgeranyl diphosphate biosynthesis; geranylgeranyl diphosphate from farnesyl diphosphate and isopentenyl diphosphate: step 1/1. Functionally, catalyzes the condensation of farnesyl diphosphate (FPP) and isopentenyl diphosphate (IPP) to yield geranylgeranyl diphosphate (GGPP) needed for biosynthesis of carotenoids and diterpenes. The chain is Geranylgeranyl diphosphate synthase (crtE) from Pseudescherichia vulneris (Escherichia vulneris).